The sequence spans 660 residues: Anoctamin-10 (660 aa).

Residues 1–207 (MKVTLSALDT…DSIRGYFGET (207 aa)) lie on the Cytoplasmic side of the membrane. Residues 208-228 (IALYFGFLEYFTFALIPMAVI) traverse the membrane as a helical segment. Topologically, residues 229 to 240 (GLPYYLFVWEDY) are extracellular. The chain crosses the membrane as a helical span at residues 241-261 (DKYVIFASFNLIWSTVILELW). Residues 262-316 (KRGCANMTYRWGTLLMKRKFEEPRPGFHGVLGINSITGKEEPLYPSYKRQLRIYL) lie on the Cytoplasmic side of the membrane. The chain crosses the membrane as a helical span at residues 317-337 (VSLPFVCLCLYFSLYVMMIYF). At 338-352 (DMEVWALGLHENSGS) the chain is on the extracellular side. The chain crosses the membrane as a helical span at residues 353-373 (EWTSVLLYVPSIIYAIVIEIM). Residues 374–400 (NRLYRYAAEFLTSWENHRLESAYQNHL) are Cytoplasmic-facing. Residues 401–421 (ILKVLVFNFLNCFASLFYIAF) traverse the membrane as a helical segment. Over 422-500 (VLKDMKLLRQ…YLGTFDDYLE (79 aa)) the chain is Extracellular. The helical transmembrane segment at 501-521 (LFLQFGYVSLFSCVYPLAAAF) threads the bilayer. At 522-553 (AVLNNFTEVNSDALKMCRVFKRPFSEPSANIG) the chain is on the cytoplasmic side. Residues 554-574 (VWQLAFETMSVISVVTNCALI) traverse the membrane as a helical segment. At 575–590 (GMSPQVNAVFPESKAD) the chain is on the extracellular side. A helical transmembrane segment spans residues 591–611 (LILIVVAVEHALLALKFILAF). The Cytoplasmic portion of the chain corresponds to 612 to 660 (AIPDKPRHIQMKLARLEFESLEALKQQQMKLVTENLKEEPMESGKEKAT).

It belongs to the anoctamin family. Highly expressed in the brain. Intermediate levels in the retina and heart and low levels in the placenta, liver, lung, duodenum, kidney, testis and spleen. In brain areas, highest expression in the frontal and occipital cortices and in the cerebellum. Lower expression in the fetal brain than in the adult brain.

It is found in the cell membrane. Functionally, does not exhibit calcium-activated chloride channel (CaCC) activity. Can inhibit the activity of ANO1. The sequence is that of Anoctamin-10 (ANO10) from Homo sapiens (Human).